Here is a 328-residue protein sequence, read N- to C-terminus: Cell division protein ZipA (328 aa).

Residues 1–4 (MDLN) are Periplasmic-facing. The helical transmembrane segment at 5–25 (TILIIVGIVALVALIVHGLWS) threads the bilayer. Over 26 to 328 (NRREKSKYFD…NAEQAYLARV (303 aa)) the chain is Cytoplasmic. A disordered region spans residues 44–82 (SLTSRSHTQEEMVQPNNISPNTYVENGHTPIPQPTTEKL). The span at 57-67 (QPNNISPNTYV) shows a compositional bias: polar residues.

The protein belongs to the ZipA family. As to quaternary structure, interacts with FtsZ via their C-terminal domains.

The protein resides in the cell inner membrane. Essential cell division protein that stabilizes the FtsZ protofilaments by cross-linking them and that serves as a cytoplasmic membrane anchor for the Z ring. Also required for the recruitment to the septal ring of downstream cell division proteins. This chain is Cell division protein ZipA, found in Haemophilus influenzae (strain ATCC 51907 / DSM 11121 / KW20 / Rd).